The primary structure comprises 232 residues: Ubiquinone biosynthesis O-methyltransferase (232 aa).

S-adenosyl-L-methionine-binding residues include R36, G55, D76, and M120.

This sequence belongs to the methyltransferase superfamily. UbiG/COQ3 family.

It carries out the reaction a 3-demethylubiquinol + S-adenosyl-L-methionine = a ubiquinol + S-adenosyl-L-homocysteine + H(+). It catalyses the reaction a 3-(all-trans-polyprenyl)benzene-1,2-diol + S-adenosyl-L-methionine = a 2-methoxy-6-(all-trans-polyprenyl)phenol + S-adenosyl-L-homocysteine + H(+). The protein operates within cofactor biosynthesis; ubiquinone biosynthesis. Its function is as follows. O-methyltransferase that catalyzes the 2 O-methylation steps in the ubiquinone biosynthetic pathway. This is Ubiquinone biosynthesis O-methyltransferase from Burkholderia vietnamiensis (strain G4 / LMG 22486) (Burkholderia cepacia (strain R1808)).